Consider the following 171-residue polypeptide: Glucagon family neuropeptides (171 aa).

The N-terminal stretch at 1-22 is a signal peptide; it reads MYRKALLVWLLVYGIMRCTVHS. A propeptide spanning residues 23-76 is cleaved from the precursor; that stretch reads SPTALKYPALRLEDEVYDEDGNTLPDFAFDNNPIGIGNPASVFDDMYSFYYPAE. Positions 145-153 are important for receptor binding; the sequence is VKKYLAAVL. Position 164 is a lysine amide (Lys164). Residues 168–171 constitute a propeptide that is removed on maturation; it reads VAYL.

Belongs to the glucagon family.

It is found in the secreted. Functionally, primary role of GRF is to release GH from the pituitary. PACAP is a neuropeptide involved in diverse array of physiological processes through activating the PACAP subfamily of class B1 G protein-coupled receptors: VIP receptor 1 (VIPR1), VIP receptor 2 (VIPR2), and PACAP type I receptor (ADCYAP1R1). Exerts neuroprotective and general cytoprotective effects due to anti-apoptotic, anti-inflammatory, and antioxidant actions. This chain is Glucagon family neuropeptides (adcyap1), found in Pelophylax ridibundus (Marsh frog).